The chain runs to 430 residues: tRNA(Ile)-lysidine synthase (430 aa).

21 to 26 (SGGLDS) contributes to the ATP binding site.

The protein belongs to the tRNA(Ile)-lysidine synthase family.

The protein resides in the cytoplasm. It carries out the reaction cytidine(34) in tRNA(Ile2) + L-lysine + ATP = lysidine(34) in tRNA(Ile2) + AMP + diphosphate + H(+). Its function is as follows. Ligates lysine onto the cytidine present at position 34 of the AUA codon-specific tRNA(Ile) that contains the anticodon CAU, in an ATP-dependent manner. Cytidine is converted to lysidine, thus changing the amino acid specificity of the tRNA from methionine to isoleucine. The chain is tRNA(Ile)-lysidine synthase from Salmonella schwarzengrund (strain CVM19633).